The chain runs to 160 residues: MMERFEKIEMKIPAKAEYVAIIRLTMAGVANRMGFAYDDIEDMKIAISEACTNIVQHAYKEDVGEIAIVFGLYEDRLEIMVADNGVSFDFNNLRSKVGPYDISKPVEHLPENGLGLYLINTLMDDIQIMHDEGMTVLMTKYIQREQVENDGNPISTYNSY.

Belongs to the anti-sigma-factor family.

It carries out the reaction L-seryl-[protein] + ATP = O-phospho-L-seryl-[protein] + ADP + H(+). The enzyme catalyses L-threonyl-[protein] + ATP = O-phospho-L-threonyl-[protein] + ADP + H(+). In terms of biological role, negative regulator of sigma-B activity. Phosphorylates and inactivates its specific antagonist protein, RsbV. Upon phosphorylation of RsbV, RsbW is released and binds to sigma-B, thereby blocking its ability to form an RNA polymerase holoenzyme (E-sigma-B). This is Serine-protein kinase RsbW from Bacillus cereus (strain Q1).